Reading from the N-terminus, the 497-residue chain is Galactose-1-phosphate uridylyltransferase (497 aa).

It belongs to the galactose-1-phosphate uridylyltransferase type 2 family.

The protein localises to the cytoplasm. It carries out the reaction alpha-D-galactose 1-phosphate + UDP-alpha-D-glucose = alpha-D-glucose 1-phosphate + UDP-alpha-D-galactose. The protein operates within carbohydrate metabolism; galactose metabolism. This chain is Galactose-1-phosphate uridylyltransferase, found in Clostridium acetobutylicum (strain ATCC 824 / DSM 792 / JCM 1419 / IAM 19013 / LMG 5710 / NBRC 13948 / NRRL B-527 / VKM B-1787 / 2291 / W).